Consider the following 494-residue polypeptide: Ubiquitin carboxyl-terminal hydrolase 27 (494 aa).

A helical membrane pass occupies residues Leu-30 to Phe-50. A USP domain is found at Pro-74–Leu-494. The active-site Nucleophile is the Cys-83. The Proton acceptor role is filled by His-440.

Belongs to the peptidase C19 family.

The protein resides in the membrane. The enzyme catalyses Thiol-dependent hydrolysis of ester, thioester, amide, peptide and isopeptide bonds formed by the C-terminal Gly of ubiquitin (a 76-residue protein attached to proteins as an intracellular targeting signal).. In terms of biological role, recognizes and hydrolyzes the peptide bond at the C-terminal Gly of ubiquitin. Involved in the processing of poly-ubiquitin precursors as well as that of ubiquitinated proteins. This is Ubiquitin carboxyl-terminal hydrolase 27 (UBP27) from Arabidopsis thaliana (Mouse-ear cress).